A 154-amino-acid polypeptide reads, in one-letter code: Endoribonuclease YbeY (154 aa).

Residues histidine 114, histidine 118, and histidine 124 each coordinate Zn(2+).

This sequence belongs to the endoribonuclease YbeY family. Zn(2+) serves as cofactor.

Its subcellular location is the cytoplasm. In terms of biological role, single strand-specific metallo-endoribonuclease involved in late-stage 70S ribosome quality control and in maturation of the 3' terminus of the 16S rRNA. This chain is Endoribonuclease YbeY, found in Anaplasma phagocytophilum (strain HZ).